Reading from the N-terminus, the 707-residue chain is MAP kinase-interacting serine/threonine-protein kinase mnk-1 (707 aa).

A compositionally biased stretch (polar residues) spans 1–24 (MFFLDNTDSMTSSSRGITMPNTIS). Disordered stretches follow at residues 1 to 29 (MFFLDNTDSMTSSSRGITMPNTISSHEDV) and 101 to 131 (RQRERETYEDEDVLSSSDESSGRPIPRYVGR). The region spanning 203 to 493 (KLTDEHLGSG…ADQILSHRWL (291 aa)) is the Protein kinase domain. ATP-binding positions include 209 to 217 (LGSGAYGSV) and K232. D325 serves as the catalytic Proton acceptor. Disordered regions lie at residues 589-628 (RSGEFTPPISRASPTTPPPSMLNLSEDLTDSPVKRRSADD) and 688-707 (FEDEQENANPIHRIETQVNV).

Belongs to the protein kinase superfamily. CAMK Ser/Thr protein kinase family. Requires Mg(2+) as cofactor. As to expression, expressed in pharynx, intestine, vulva and body wall muscles.

The protein localises to the nucleus. Its subcellular location is the cytoplasm. The catalysed reaction is L-seryl-[protein] + ATP = O-phospho-L-seryl-[protein] + ADP + H(+). It carries out the reaction L-threonyl-[protein] + ATP = O-phospho-L-threonyl-[protein] + ADP + H(+). Functionally, serine/threonine-protein kinase which is required in the germline to positively regulate lifespan. May play a role in body wall muscle contraction. May be involved in embryonic cytokinesis. The chain is MAP kinase-interacting serine/threonine-protein kinase mnk-1 from Caenorhabditis elegans.